The primary structure comprises 305 residues: Probable G-protein coupled receptor 141 (305 aa).

The Extracellular portion of the chain corresponds to 1–22 (MPGHNTSRNSSCDPIVTPHLIS). N-linked (GlcNAc...) asparagine glycosylation is found at asparagine 5 and asparagine 9. The chain crosses the membrane as a helical span at residues 23-43 (LYFIVLIGGLVGVISILFLLV). The Cytoplasmic portion of the chain corresponds to 44–50 (KMNTRSV). The chain crosses the membrane as a helical span at residues 51-71 (TTMAVINLVVVHSVFLLTVPF). At 72–89 (RLTYLIKKTWMFGLPFCK) the chain is on the extracellular side. The chain crosses the membrane as a helical span at residues 90–110 (FVSAMLHIHMYLTFLFYVVIL). Topologically, residues 111-131 (VTRYLIFFKCKDKVEFYRKLH) are cytoplasmic. A helical membrane pass occupies residues 132–152 (AVAASAGMWTLVIVIVVPLVV). The Extracellular segment spans residues 153–183 (SRYGIHEEYNEEHCFKFHKELAYTYVKIINY). A helical transmembrane segment spans residues 184–204 (MIVIFVIAVAVILLVFQVFII). Residues 205 to 227 (MLMVQKLRHSLLSHQEFWAQLKN) are Cytoplasmic-facing. The chain crosses the membrane as a helical span at residues 228–248 (LFFIGVILVCFLPYQFFRIYY). Residues 249 to 267 (LNVVTHSNACNSKVAFYNE) are Extracellular-facing. The helical transmembrane segment at 268 to 288 (IFLSVTAISCYDLLLFVFGGS) threads the bilayer. Residues 289-305 (HWFKQKIIGLWNCVLCR) are Cytoplasmic-facing.

It belongs to the G-protein coupled receptor 1 family.

The protein resides in the cell membrane. Functionally, orphan receptor. In Homo sapiens (Human), this protein is Probable G-protein coupled receptor 141 (GPR141).